A 210-amino-acid chain; its full sequence is MAWSITNKADTSSFTKMAEIRAHLRNSAENKDKNEDIFPEDVIIPSTKPKTKRTTTPRKPAATKRSTKKDKEKEEVEEVVIEEYHQTTEENSPPPSSSPGVGDIVESVAAVELDDSDGDDEPMVQVEAGKVNHSARSDLSDLKVATDNIVKDLKKIITRISAVSTVLEDVQAAGISRQFTSMTKAITTLSDLVTEGKSKVVRKKVKTCKK.

Basic and acidic residues predominate over residues 25-36; that stretch reads RNSAENKDKNED. Residues 25-102 are disordered; it reads RNSAENKDKN…PPPSSSPGVG (78 aa). Basic residues predominate over residues 49–68; it reads PKTKRTTTPRKPAATKRSTK.

This sequence belongs to the orthopoxvirus OPG110 family. Interacts with the DNA polymerase processivity factor A20. Interacts with B1R kinase. Interacts with the late transcription factors VLTF-1 and VLTF-3. Interacts with the late transcription elongation factor G2. Interacts with itself. Might be part of a transcription complex composed at least of G2, A18, and H5. Post-translationally, phosphorylated at multiple sites. Phosphorylation is necessary for cleavage activity. Phosphorylated by the viral B1R and F10 kinases.

The protein localises to the virion. Its subcellular location is the host cytoplasm. Functionally, involved in the co-transcriptional or post-transcriptional endoribonucleolytic cleavage that generates sequence-homogeneous 3' ends during late transcription. Involved in postreplicative transcription elongation on intermediate and late genes. Also involved in DNA replication and in multiple steps of virion morphogenesis. Required both for inclusion of virosoplasm into crescents as well as for maturation of immature virions (IV) into mature virions (MV). The polypeptide is Late transcription elongation factor OPG110 (OPG110) (Cynomys gunnisoni (Gunnison's prairie dog)).